We begin with the raw amino-acid sequence, 136 residues long: Holo-[acyl-carrier-protein] synthase (136 aa).

2 residues coordinate Mg(2+): D8 and E57.

This sequence belongs to the P-Pant transferase superfamily. AcpS family. Mg(2+) is required as a cofactor.

The protein localises to the cytoplasm. The enzyme catalyses apo-[ACP] + CoA = holo-[ACP] + adenosine 3',5'-bisphosphate + H(+). In terms of biological role, transfers the 4'-phosphopantetheine moiety from coenzyme A to a Ser of acyl-carrier-protein. In Azorhizobium caulinodans (strain ATCC 43989 / DSM 5975 / JCM 20966 / LMG 6465 / NBRC 14845 / NCIMB 13405 / ORS 571), this protein is Holo-[acyl-carrier-protein] synthase.